A 491-amino-acid polypeptide reads, in one-letter code: Cyclin-B1-5 (491 aa).

Residues 275–347 (DMYSFYKEVE…VKAVPKRELQ (73 aa)) enclose the Cyclin N-terminal domain.

This sequence belongs to the cyclin family. Cyclin AB subfamily. As to expression, expressed in roots, stems and flowers.

The protein is Cyclin-B1-5 (CYCB1-5) of Arabidopsis thaliana (Mouse-ear cress).